Here is a 328-residue protein sequence, read N- to C-terminus: Ankyrin repeat domain-containing protein 2 (328 aa).

A Phosphoserine modification is found at Ser-36. Ser-68 is modified (phosphoserine; by PKB/AKT2). Residues 96-116 form a disordered region; it reads RDALAAAQEPPPEPEEITGPV. 5 ANK repeats span residues 116 to 145, 149 to 178, 182 to 211, 215 to 244, and 248 to 277; these read VNEETFLKAAVEGKMKVIDKYLADGGSADT, FRRTALHRASLEGHMEILEKLLENGATVDF, LDCTAMHWACRGGHLEVVRLLQSRGADTNV, LLSTPLHVAVRTGHVEIVEHFLSLGLDINA, and EGDSALHDAVRLNRYKIIKLLLLHGADMMA. Residues 297-328 form a disordered region; sequence RHALEHPEPESEQNGLERPGSGRETPQPIPAQ.

In terms of assembly, interacts with ID3; both proteins cooperate in myoblast differentiation. Interacts with TTN/titin. Interacts (via ANK repeats) with TCAP; the interaction is direct. Interacts with TJP1 (via PDZ domains). Interacts with PML; the interaction is direct. Interacts with p53/TP53. Interacts with YBX1. Interacts with AKT2. In terms of processing, phosphorylation at Ser-68 by PKB/AKT2 in response to oxidative stress induces translocation to the nucleus and negatively regulates myoblast differentiation. In terms of tissue distribution, expressed by myoblasts (at protein level). Expressed in skeletal and cardiac muscles.

The protein localises to the cytoplasm. Its subcellular location is the myofibril. It is found in the sarcomere. It localises to the i band. The protein resides in the cytosol. The protein localises to the nucleus. Its subcellular location is the PML body. Its function is as follows. Functions as a negative regulator of myocyte differentiation. May interact with both sarcoplasmic structural proteins and nuclear proteins to regulate gene expression during muscle development and in response to muscle stress. The polypeptide is Ankyrin repeat domain-containing protein 2 (Ankrd2) (Mus musculus (Mouse)).